Reading from the N-terminus, the 157-residue chain is UPF0587 protein C2D10.03c (157 aa).

Zn(2+)-binding residues include Cys-34, Cys-37, Cys-68, and Cys-71.

The protein belongs to the UPF0587 family.

The chain is UPF0587 protein C2D10.03c from Schizosaccharomyces pombe (strain 972 / ATCC 24843) (Fission yeast).